A 734-amino-acid polypeptide reads, in one-letter code: Polyribonucleotide nucleotidyltransferase (734 aa).

Mg(2+) contacts are provided by Asp497 and Asp503. The KH domain occupies Pro564 to Ile623. Residues Gly633–Lys707 enclose the S1 motif domain. The interval Gly700–Arg734 is disordered. Residues Ala717 to Arg734 are compositionally biased toward basic and acidic residues.

The protein belongs to the polyribonucleotide nucleotidyltransferase family. Requires Mg(2+) as cofactor.

Its subcellular location is the cytoplasm. It carries out the reaction RNA(n+1) + phosphate = RNA(n) + a ribonucleoside 5'-diphosphate. Involved in mRNA degradation. Catalyzes the phosphorolysis of single-stranded polyribonucleotides processively in the 3'- to 5'-direction. The protein is Polyribonucleotide nucleotidyltransferase of Pelotomaculum thermopropionicum (strain DSM 13744 / JCM 10971 / SI).